The following is a 325-amino-acid chain: 5-dehydro-2-deoxygluconokinase (325 aa).

Belongs to the carbohydrate kinase PfkB family.

It catalyses the reaction 5-dehydro-2-deoxy-D-gluconate + ATP = 6-phospho-5-dehydro-2-deoxy-D-gluconate + ADP + H(+). It participates in polyol metabolism; myo-inositol degradation into acetyl-CoA; acetyl-CoA from myo-inositol: step 5/7. In terms of biological role, catalyzes the phosphorylation of 5-dehydro-2-deoxy-D-gluconate (2-deoxy-5-keto-D-gluconate or DKG) to 6-phospho-5-dehydro-2-deoxy-D-gluconate (DKGP). The chain is 5-dehydro-2-deoxygluconokinase from Listeria innocua serovar 6a (strain ATCC BAA-680 / CLIP 11262).